The chain runs to 275 residues: Myb/SANT-like DNA-binding domain-containing protein 3 (275 aa).

The region spanning 13–78 is the Myb-like domain; that stretch reads FSELEKSILL…QLKKCWENIK (66 aa). Phosphoserine is present on residues Ser-96 and Ser-98. Lys-154 is covalently cross-linked (Glycyl lysine isopeptide (Lys-Gly) (interchain with G-Cter in SUMO2)). A coiled-coil region spans residues 211–247; it reads QLIQMNEVHVAKIQQIERECEMAEEEHRIKMEVLNKK. The residue at position 274 (Ser-274) is a Phosphoserine.

It belongs to the MSANTD3 family. In terms of tissue distribution, expressed in brain.

This chain is Myb/SANT-like DNA-binding domain-containing protein 3 (MSANTD3), found in Homo sapiens (Human).